We begin with the raw amino-acid sequence, 149 residues long: Flavodoxin YqcA (149 aa).

Residues 4–145 enclose the Flavodoxin-like domain; that stretch reads IGIFVGTMYG…ESNPWVEQWG (142 aa). Residues 10–15 and 99–101 contribute to the FMN site; these read TMYGNS and NFC.

This sequence belongs to the flavodoxin family. MioC subfamily. Monomer. Requires FMN as cofactor.

Functionally, probable electron transporter. The sequence is that of Flavodoxin YqcA (yqcA) from Escherichia coli (strain K12).